The chain runs to 150 residues: Avidin-related protein 2 (150 aa).

The signal sequence occupies residues 1–24 (MVHATSPLLLLLLLSLALVAPSLS). Residues 26 to 147 (RKCSLTGEWD…GNNDFTRQHT (122 aa)) enclose the Avidin-like domain. A disulfide bridge links cysteine 28 with cysteine 105. 5 residues coordinate biotin: asparagine 36, serine 40, tyrosine 57, threonine 59, and aspartate 63. 2 N-linked (GlcNAc...) asparagine glycosylation sites follow: asparagine 67 and asparagine 93. Serine 95, serine 99, and asparagine 140 together coordinate biotin.

In terms of assembly, homotetramer. Post-translationally, glycosylated.

The protein localises to the secreted. In terms of biological role, forms a strong non-covalent specific complex with biotin. This Gallus gallus (Chicken) protein is Avidin-related protein 2 (AVR2).